We begin with the raw amino-acid sequence, 702 residues long: Elongation factor G 2 (702 aa).

Residues 8–285 (DMVRNIGISA…AVTYYLPSPA (278 aa)) form the tr-type G domain. GTP is bound by residues 17–24 (AHIDSGKT), 84–88 (DTPGH), and 138–141 (NKLD).

This sequence belongs to the TRAFAC class translation factor GTPase superfamily. Classic translation factor GTPase family. EF-G/EF-2 subfamily.

It is found in the cytoplasm. Functionally, catalyzes the GTP-dependent ribosomal translocation step during translation elongation. During this step, the ribosome changes from the pre-translocational (PRE) to the post-translocational (POST) state as the newly formed A-site-bound peptidyl-tRNA and P-site-bound deacylated tRNA move to the P and E sites, respectively. Catalyzes the coordinated movement of the two tRNA molecules, the mRNA and conformational changes in the ribosome. This chain is Elongation factor G 2, found in Bdellovibrio bacteriovorus (strain ATCC 15356 / DSM 50701 / NCIMB 9529 / HD100).